The following is a 149-amino-acid chain: Large ribosomal subunit protein uL15 (149 aa).

The interval 30–63 (GLGKTAGRGHKGSFARKGGGKIKPGFEGGQTPMQ) is disordered. The span at 36–49 (GRGHKGSFARKGGG) shows a compositional bias: basic residues.

It belongs to the universal ribosomal protein uL15 family. In terms of assembly, part of the 50S ribosomal subunit.

Functionally, binds to the 23S rRNA. This Xylella fastidiosa (strain 9a5c) protein is Large ribosomal subunit protein uL15.